The primary structure comprises 554 residues: Glucose-6-phosphate isomerase 1 (554 aa).

Glu359 functions as the Proton donor in the catalytic mechanism. Residues His390 and Lys518 contribute to the active site.

This sequence belongs to the GPI family.

The protein localises to the cytoplasm. The enzyme catalyses alpha-D-glucose 6-phosphate = beta-D-fructose 6-phosphate. Its pathway is carbohydrate biosynthesis; gluconeogenesis. It functions in the pathway carbohydrate degradation; glycolysis; D-glyceraldehyde 3-phosphate and glycerone phosphate from D-glucose: step 2/4. Functionally, catalyzes the reversible isomerization of glucose-6-phosphate to fructose-6-phosphate. The polypeptide is Glucose-6-phosphate isomerase 1 (Pseudomonas putida (strain ATCC 47054 / DSM 6125 / CFBP 8728 / NCIMB 11950 / KT2440)).